Here is a 344-residue protein sequence, read N- to C-terminus: Arginase 2, chloroplastic/mitochondrial (344 aa).

A chloroplast and mitochondrion-targeting transit peptide spans 1-26; sequence MWKIGQRGVPYFQRLIAAPFTTLRSL. Residues His163, Asp187, His189, and Asp191 each contribute to the Mn(2+) site. Substrate is bound by residues 189–193, 197–199, and Asn228; these read HPDIY and EGN. 2 residues coordinate Mn(2+): Asp272 and Asp274. Glu315 contacts substrate.

Belongs to the arginase family. The cofactor is Mn(2+). In terms of tissue distribution, expressed in vasculature of roots, root tips, leaves and cotyledons.

The protein resides in the mitochondrion. The protein localises to the plastid. It localises to the chloroplast. The catalysed reaction is L-arginine + H2O = urea + L-ornithine. The enzyme catalyses agmatine + H2O = urea + putrescine. It participates in nitrogen metabolism; urea cycle; L-ornithine and urea from L-arginine: step 1/1. It functions in the pathway amine and polyamine biosynthesis; putrescine biosynthesis via agmatine pathway; putrescine from agmatine: step 1/1. Functionally, catalyzes the hydrolysis of L-arginine to urea and L-ornithine. The latter can be utilized in the urea cycle or as a precursor for the synthesis of both polyamines and proline. Possesses agmatinase activity. Catalyzes the formation of putrescine from agmatine. This is Arginase 2, chloroplastic/mitochondrial (ARGAH2) from Arabidopsis thaliana (Mouse-ear cress).